Consider the following 341-residue polypeptide: Ketol-acid reductoisomerase (NADP(+)) (341 aa).

Positions 2–181 (VKVYYNGDAN…GSARAGVIET (180 aa)) constitute a KARI N-terminal Rossmann domain. Residues 25-28 (YGSQ), Arg-48, Ser-52, and 82-85 (DEHQ) each bind NADP(+). His-107 is a catalytic residue. Gly-133 contacts NADP(+). The region spanning 182-327 (TFKEETETDL…RELRKMMPFV (146 aa)) is the KARI C-terminal knotted domain. Asp-190, Glu-194, Glu-226, and Glu-230 together coordinate Mg(2+). Substrate is bound at residue Ser-251.

Belongs to the ketol-acid reductoisomerase family. Mg(2+) is required as a cofactor.

The catalysed reaction is (2R)-2,3-dihydroxy-3-methylbutanoate + NADP(+) = (2S)-2-acetolactate + NADPH + H(+). It carries out the reaction (2R,3R)-2,3-dihydroxy-3-methylpentanoate + NADP(+) = (S)-2-ethyl-2-hydroxy-3-oxobutanoate + NADPH + H(+). It participates in amino-acid biosynthesis; L-isoleucine biosynthesis; L-isoleucine from 2-oxobutanoate: step 2/4. It functions in the pathway amino-acid biosynthesis; L-valine biosynthesis; L-valine from pyruvate: step 2/4. Its function is as follows. Involved in the biosynthesis of branched-chain amino acids (BCAA). Catalyzes an alkyl-migration followed by a ketol-acid reduction of (S)-2-acetolactate (S2AL) to yield (R)-2,3-dihydroxy-isovalerate. In the isomerase reaction, S2AL is rearranged via a Mg-dependent methyl migration to produce 3-hydroxy-3-methyl-2-ketobutyrate (HMKB). In the reductase reaction, this 2-ketoacid undergoes a metal-dependent reduction by NADPH to yield (R)-2,3-dihydroxy-isovalerate. This chain is Ketol-acid reductoisomerase (NADP(+)), found in Anoxybacillus flavithermus (strain DSM 21510 / WK1).